Here is a 571-residue protein sequence, read N- to C-terminus: Urease subunit alpha (571 aa).

Positions 133–571 (GGIDTHVHFI…LPLTQRYFLF (439 aa)) constitute a Urease domain. 3 residues coordinate Ni(2+): His138, His140, and Lys221. The residue at position 221 (Lys221) is an N6-carboxylysine. His223 is a substrate binding site. Ni(2+) contacts are provided by His250 and His276. The active-site Proton donor is the His324. Asp364 is a Ni(2+) binding site.

Belongs to the metallo-dependent hydrolases superfamily. Urease alpha subunit family. Heterotrimer of UreA (gamma), UreB (beta) and UreC (alpha) subunits. Three heterotrimers associate to form the active enzyme. Requires Ni cation as cofactor. Carboxylation allows a single lysine to coordinate two nickel ions.

Its subcellular location is the cytoplasm. It catalyses the reaction urea + 2 H2O + H(+) = hydrogencarbonate + 2 NH4(+). The protein operates within nitrogen metabolism; urea degradation; CO(2) and NH(3) from urea (urease route): step 1/1. The polypeptide is Urease subunit alpha (Staphylococcus aureus (strain USA300)).